Reading from the N-terminus, the 313-residue chain is Acetylglutamate kinase (313 aa).

Substrate-binding positions include 84 to 85 (GG), R106, and N210.

Belongs to the acetylglutamate kinase family. ArgB subfamily.

The protein resides in the cytoplasm. The enzyme catalyses N-acetyl-L-glutamate + ATP = N-acetyl-L-glutamyl 5-phosphate + ADP. The protein operates within amino-acid biosynthesis; L-arginine biosynthesis; N(2)-acetyl-L-ornithine from L-glutamate: step 2/4. In terms of biological role, catalyzes the ATP-dependent phosphorylation of N-acetyl-L-glutamate. The polypeptide is Acetylglutamate kinase (Gluconacetobacter diazotrophicus (strain ATCC 49037 / DSM 5601 / CCUG 37298 / CIP 103539 / LMG 7603 / PAl5)).